The sequence spans 304 residues: L-xylo-3-hexulose reductase (304 aa).

Residues I19, D68, and N107 each contribute to the NADP(+) site. Active-site proton donor residues include S163 and S164. NADP(+) is bound by residues Y177, K181, and A209. Y177 (proton acceptor) is an active-site residue. The Lowers pKa of active site Tyr role is filled by K181.

The protein belongs to the short-chain dehydrogenases/reductases (SDR) family.

The catalysed reaction is D-sorbitol + NADP(+) = L-xylo-3-hexulose + NADPH + H(+). Its pathway is carbohydrate degradation. Functionally, L-xylulose reductase involved in the catabolism of D-galactose through an oxidoreductive pathway. Catalyzes the NADPH-dependent reduction of L-xylo-3-hexulose. Is also active with D-ribulose and L-xylulose, and to a lesser extent with D-xylulose, D-fructose and L- and D-sorbose. In the reverse reaction, shows activity with D-sorbitol and D-mannitol, low activity with xylitol, but no activity with galactitol, ribitol, and L- and D-arabitol. This is L-xylo-3-hexulose reductase from Hypocrea jecorina (strain QM6a) (Trichoderma reesei).